A 233-amino-acid chain; its full sequence is Probable septum site-determining protein MinC (233 aa).

Positions Q104–P124 are disordered.

This sequence belongs to the MinC family. In terms of assembly, interacts with MinD and FtsZ.

Its function is as follows. Cell division inhibitor that blocks the formation of polar Z ring septums. Rapidly oscillates between the poles of the cell to destabilize FtsZ filaments that have formed before they mature into polar Z rings. Prevents FtsZ polymerization. This Serratia proteamaculans (strain 568) protein is Probable septum site-determining protein MinC.